A 170-amino-acid chain; its full sequence is Double homeobox protein 1 (170 aa).

DNA-binding regions (homeobox) lie at residues 19-78 and 94-153; these read GRRM…LRQH and GRRK…RGQS. The tract at residues 75–100 is disordered; it reads LRQHRRQSRPWPGRRDPQKGRRKRTA.

It belongs to the paired homeobox family. Expressed in rhabdomyosarcoma TE671 cells as well as in several other normal and cancer cells.

The protein resides in the nucleus. Probable transcription activator. Binds the P5 DNA element sequence 5'-GATCTGAGTCTAATTGAGAATTACTGTAC-3'. The protein is Double homeobox protein 1 (DUX1) of Homo sapiens (Human).